We begin with the raw amino-acid sequence, 279 residues long: Vitamin B12-binding protein (279 aa).

The N-terminal stretch at 1 to 20 (MTFRFLCWLTGLLLCTAAYA) is a signal peptide. In terms of domain architecture, Fe/B12 periplasmic-binding spans 24–276 (RVISLAPHAT…QLAELKLAPS (253 aa)). Cysteines 189 and 265 form a disulfide.

It belongs to the BtuF family. The complex is composed of two ATP-binding proteins (BtuD), two transmembrane proteins (BtuC) and a solute-binding protein (BtuF).

It localises to the periplasm. Its function is as follows. Part of the ABC transporter complex BtuCDF involved in vitamin B12 import. Binds vitamin B12 and delivers it to the periplasmic surface of BtuC. This Pectobacterium atrosepticum (strain SCRI 1043 / ATCC BAA-672) (Erwinia carotovora subsp. atroseptica) protein is Vitamin B12-binding protein.